A 129-amino-acid polypeptide reads, in one-letter code: Small ribosomal subunit protein uS9 (129 aa).

It belongs to the universal ribosomal protein uS9 family.

The chain is Small ribosomal subunit protein uS9 from Helicobacter acinonychis (strain Sheeba).